A 342-amino-acid polypeptide reads, in one-letter code: Cystein proteinase inhibitor protein salarin (342 aa).

Residues 1–19 (MKSLVLLLLVAVTVSSVVS) form the signal peptide. The N-linked (GlcNAc) asparagine glycan is linked to Asn-153. Residue Thr-184 is glycosylated (O-linked (GlcNAc) threonine).

N-glycosylated, with sialylated biantennary complex-type glycans. Post-translationally, O-glycosylated, with sialylated oligosaccharides.

Its subcellular location is the cytoplasm. It is found in the vacuole. In terms of biological role, inhibits papain and ficin (cysteine proteinases) but not trypsin (a serine proteinase). In Salvelinus alpinus (Arctic char), this protein is Cystein proteinase inhibitor protein salarin (salarin).